Here is a 41-residue protein sequence, read N- to C-terminus: ORF3c protein (41 aa).

Functionally, may play a role in host modulation. This chain is ORF3c protein, found in Severe acute respiratory syndrome coronavirus 2 (2019-nCoV).